The chain runs to 441 residues: Serine/threonine-protein phosphatase 2A activator 1 (441 aa).

Composition is skewed to polar residues over residues 66 to 75 (NIPPSNTTHS) and 421 to 432 (QRQDDLNSTTYR). 2 disordered regions span residues 66-100 (NIPP…SSNQ) and 421-441 (QRQD…LGRN).

Belongs to the PTPA-type PPIase family.

The protein localises to the cytoplasm. It localises to the nucleus. It carries out the reaction [protein]-peptidylproline (omega=180) = [protein]-peptidylproline (omega=0). In terms of biological role, PPIases accelerate the folding of proteins. It catalyzes the cis-trans isomerization of proline imidic peptide bonds in oligopeptides. Acts as a regulatory subunit for PP2A-like phosphatases modulating their activity or substrate specificity, probably by inducing a conformational change in the catalytic subunit, a direct target of the PPIase. Can reactivate inactive phosphatase PP2A-phosphatase methylesterase complexes (PP2Ai) in presence of ATP and Mg(2+) by dissociating the inactive form from the complex. This is Serine/threonine-protein phosphatase 2A activator 1 (RRD1) from Debaryomyces hansenii (strain ATCC 36239 / CBS 767 / BCRC 21394 / JCM 1990 / NBRC 0083 / IGC 2968) (Yeast).